A 454-amino-acid polypeptide reads, in one-letter code: UPF0210 protein EUBELI_01067 (454 aa).

It belongs to the UPF0210 family. In terms of assembly, homodimer.

The protein is UPF0210 protein EUBELI_01067 of Lachnospira eligens (strain ATCC 27750 / DSM 3376 / VPI C15-48 / C15-B4) (Eubacterium eligens).